We begin with the raw amino-acid sequence, 468 residues long: Serine/threonine-protein phosphatase 2A 55 kDa regulatory subunit B beta isoform (468 aa).

7 WD repeats span residues 47 to 86, 112 to 153, 196 to 234, 245 to 285, 304 to 342, 359 to 400, and 435 to 468; these read SSAD…KNQP, EIEE…KRPE, AHTY…RSFN, ELTE…LCDK, EIIS…RPIE, ENDC…DVTL, and DFSK…DKVN.

It belongs to the phosphatase 2A regulatory subunit B family. In terms of assembly, PP2A consists of a common heterodimeric core enzyme, composed of a 36 kDa catalytic subunit (subunit C) and a 65 kDa constant regulatory subunit (PR65 or subunit A), that associates with a variety of regulatory subunits.

Its subcellular location is the cytoplasm. The protein localises to the cytoskeleton. It localises to the membrane. Its function is as follows. The B regulatory subunit might modulate substrate selectivity and catalytic activity, and might also direct the localization of the catalytic enzyme to a particular subcellular compartment. Negatively controls the initiation of oocyte maturation. This chain is Serine/threonine-protein phosphatase 2A 55 kDa regulatory subunit B beta isoform (ppp2r2b), found in Xenopus laevis (African clawed frog).